A 508-amino-acid polypeptide reads, in one-letter code: Probable polyol transporter 3 (508 aa).

The next 12 membrane-spanning stretches (helical) occupy residues 21–41, 60–80, 90–110, 120–140, 147–167, 178–198, 280–300, 318–338, 348–368, 384–404, 418–438, and 448–468; these read FAFG…YDTG, QIEV…LTAG, YTIA…GYGP, CIAG…SAEI, GFLT…GYVS, LGWR…AFGI, ILIA…EAVV, LLLA…IATF, LLLT…VSLT, IVST…ITWV, GASI…MSFL, and GVFF…FFML.

Belongs to the major facilitator superfamily. Sugar transporter (TC 2.A.1.1) family.

The protein resides in the membrane. Its function is as follows. Plasma membrane sugar-proton symporter. The polypeptide is Probable polyol transporter 3 (PLT3) (Arabidopsis thaliana (Mouse-ear cress)).